The chain runs to 236 residues: Diaminopimelate epimerase (236 aa).

Substrate is bound by residues N8 and N55. C64 acts as the Proton donor in catalysis. Residues 65–66 (GN), N159, and 176–177 (ER) each bind substrate. The Proton acceptor role is filled by C186. 187-188 (GT) is a binding site for substrate.

It belongs to the diaminopimelate epimerase family. In terms of assembly, probably forms homotrimers.

It localises to the cytoplasm. The catalysed reaction is (2S,6S)-2,6-diaminopimelate = meso-2,6-diaminopimelate. It participates in amino-acid biosynthesis; L-lysine biosynthesis via DAP pathway; DL-2,6-diaminopimelate from LL-2,6-diaminopimelate: step 1/1. In terms of biological role, catalyzes the stereoinversion of LL-2,6-diaminopimelate (L,L-DAP) to meso-diaminopimelate (meso-DAP), a precursor of L-lysine and an essential component of the bacterial peptidoglycan. Also catalyzes the racemization of certain amino acids, including Lys, with low efficiency. The chain is Diaminopimelate epimerase from Thermotoga maritima (strain ATCC 43589 / DSM 3109 / JCM 10099 / NBRC 100826 / MSB8).